The sequence spans 147 residues: Large ribosomal subunit protein uL15 (147 aa).

The span at 1–13 shows a compositional bias: basic and acidic residues; that stretch reads MRLHDLKPAEGAR. The disordered stretch occupies residues 1 to 58; the sequence is MRLHDLKPAEGARRERKRVGRGIGSGHGKTSGRGQKGQKARSGGGVRPGFEGGQMPLT. Gly residues-rich tracts occupy residues 21-35 and 42-52; these read RGIG…GRGQ and SGGGVRPGFEG.

Belongs to the universal ribosomal protein uL15 family. As to quaternary structure, part of the 50S ribosomal subunit.

Functionally, binds to the 23S rRNA. This is Large ribosomal subunit protein uL15 from Thermoanaerobacter sp. (strain X514).